We begin with the raw amino-acid sequence, 387 residues long: MSVIKMTDLDLAGKRILIRADLNVPVKDGKVTSDARIRASLPTIEAALKQGAKVMITSHLGRPTEGEYSEEFSLKPVVDYLEEKLSSPVRLEKEYLEGVDVAEGELVVLENVRFNKGEKKDDETLAKKYASLCDIYVMDAFGTAHRAQASTHGVAKFAPVACAGPLLSAELEALGKALDNPARPMVAIVGGSKVSTKLTVLDTLSKIADQLIVGGGIANTFVAAEGHNVGRSLYEDDLLPEAKKLLISCDIPVPTDVRVATEFSETAEAILKSTHDIKDDEQILDLGDESAQRLADILKNAKTILWNGPVGVFEFPNFRQGTEIVARAIADSDAFSIAGGGDTLAAIDLFGIADKISYISTGGGAFLEFVEGKKLPAVVMLEERAKQ.

Residues 21–23, Arg36, 59–62, Arg113, and Arg146 contribute to the substrate site; these read DLN and HLGR. ATP contacts are provided by residues Lys197, Glu314, and 340 to 343; that span reads GGDT.

It belongs to the phosphoglycerate kinase family. In terms of assembly, monomer.

It localises to the cytoplasm. It catalyses the reaction (2R)-3-phosphoglycerate + ATP = (2R)-3-phospho-glyceroyl phosphate + ADP. It functions in the pathway carbohydrate degradation; glycolysis; pyruvate from D-glyceraldehyde 3-phosphate: step 2/5. The chain is Phosphoglycerate kinase from Photorhabdus laumondii subsp. laumondii (strain DSM 15139 / CIP 105565 / TT01) (Photorhabdus luminescens subsp. laumondii).